Reading from the N-terminus, the 368-residue chain is 3-dehydroquinate synthase (368 aa).

Residues 71–76 (DGEAAK), 105–109 (GATTD), 129–130 (TT), Lys-142, and Lys-151 each bind NAD(+). Residues Glu-184, His-247, and His-263 each contribute to the Zn(2+) site.

This sequence belongs to the sugar phosphate cyclases superfamily. Dehydroquinate synthase family. The cofactor is Co(2+). Requires Zn(2+) as cofactor. NAD(+) serves as cofactor.

It localises to the cytoplasm. It carries out the reaction 7-phospho-2-dehydro-3-deoxy-D-arabino-heptonate = 3-dehydroquinate + phosphate. The protein operates within metabolic intermediate biosynthesis; chorismate biosynthesis; chorismate from D-erythrose 4-phosphate and phosphoenolpyruvate: step 2/7. In terms of biological role, catalyzes the conversion of 3-deoxy-D-arabino-heptulosonate 7-phosphate (DAHP) to dehydroquinate (DHQ). This is 3-dehydroquinate synthase from Thermobifida fusca (strain YX).